Consider the following 525-residue polypeptide: Mitochondrial-processing peptidase subunit alpha (525 aa).

A mitochondrion-targeting transit peptide spans 1–33 (MAAMVLAATRLLRGSGSWGRSRPRFGDPAYRRF). Residue Lys64 is modified to N6-succinyllysine. An N6-acetyllysine modification is found at Lys299.

Belongs to the peptidase M16 family. As to quaternary structure, heterodimer of PMPCA (alpha) and PMPCB (beta) subunits, forming the mitochondrial processing protease (MPP) in which PMPCA is involved in substrate recognition and binding and PMPCB is the catalytic subunit.

It is found in the mitochondrion matrix. It localises to the mitochondrion inner membrane. Its function is as follows. Substrate recognition and binding subunit of the essential mitochondrial processing protease (MPP), which cleaves the mitochondrial sequence off newly imported precursors proteins. This is Mitochondrial-processing peptidase subunit alpha (PMPCA) from Bos taurus (Bovine).